Here is a 796-residue protein sequence, read N- to C-terminus: MKENYCLQAALVCLGMLCHSHAFAPERRGHLRPSFHGHHEKGKEGQVLQRSKRGWVWNQFFVIEEYTGPDPVLVGRLHSDIDSGDGNIKYILSGEGAGTIFVIDDKSGNIHATKTLDREERAQYTLMAQAVDRDTNRPLEPPSEFIVKVQDINDNPPEFLHETYHANVPERSNVGTSVIQVTASDADDPTYGNSAKLVYSILEGQPYFSVEAQTGIIRTALPNMDREAKEEYHVVIQAKDMGGHMGGLSGTTKVTITLTDVNDNPPKFPQSVYQMSVSEAAVPGEEVGRVKAKDPDIGENGLVTYNIVDGDGMESFEITTDYETQEGVIKLKKPVDFETKRAYSLKVEAANVHIDPKFISNGPFKDTVTVKISVEDADEPPMFLAPSYIHEVQENAAAGTVVGRVHAKDPDAANSPIRYSIDRHTDLDRFFTINPEDGFIKTTKPLDREETAWLNITVFAAEIHNRHQEAKVPVAIRVLDVNDNAPKFAAPYEGFICESDQTKPLSNQPIVTISADDKDDTANGPRFIFSLPPEIIHNPNFTVRDNRDNTAGVYARRGGFSRQKQDLYLLPIVISDGGIPPMSSTNTLTIKVCGCDVNGALLSCNAEAYILNAGLSTGALIAILACIVILLVIVVLFVTLRRQKKEPLIVFEEEDVRENIITYDDEGGGEEDTEAFDIATLQNPDGINGFIPRKDIKPEYQYMPRPGLRPAPNSVDVDDFINTRIQEADNDPTAPPYDSIQIYGYEGRGSVAGSLSSLESATTDSDLDYDYLQNWGPRFKKLADLYGSKDTFDDDS.

An N-terminal signal peptide occupies residues 1–22 (MKENYCLQAALVCLGMLCHSHA). A propeptide spanning residues 23-53 (FAPERRGHLRPSFHGHHEKGKEGQVLQRSKR) is cleaved from the precursor. 5 Cadherin domains span residues 54 to 159 (GWVW…PPEF), 160 to 268 (LHET…PPKF), 269 to 383 (PQSV…PPMF), 384 to 486 (LAPS…DNAP), and 487 to 612 (KFAA…YILN). Residues 54–617 (GWVWNQFFVI…AYILNAGLST (564 aa)) are Extracellular-facing. Residues Asn-455 and Asn-540 are each glycosylated (N-linked (GlcNAc...) asparagine). A helical transmembrane segment spans residues 618-640 (GALIAILACIVILLVIVVLFVTL). Over 641–796 (RRQKKEPLIV…GSKDTFDDDS (156 aa)) the chain is Cytoplasmic. Ser-788 bears the Phosphoserine mark. Thr-791 is subject to Phosphothreonine.

As to quaternary structure, interacts with PCDH8. Expressed mainly in brain but also found in other tissues. Expressed in neuroblasts. In the embryo from 67 to 72 days of gestation, detected at high levels in facial mesenchyme including the central palatal mesenchyme, dental mesenchyme, the eye and optic muscle, and the tongue (at protein level).

The protein resides in the cell membrane. Its function is as follows. Cadherins are calcium-dependent cell adhesion proteins. They preferentially interact with themselves in a homophilic manner in connecting cells; cadherins may thus contribute to the sorting of heterogeneous cell types. Required for proper focal adhesion assembly. Involved in the regulation of cell migration. The polypeptide is Cadherin-11 (CDH11) (Homo sapiens (Human)).